The primary structure comprises 436 residues: Prenyltransferase nscD (436 aa).

This sequence belongs to the tryptophan dimethylallyltransferase family.

The protein operates within secondary metabolite biosynthesis. Functionally, prenyltransferase; part of the gene cluster that mediates the biosynthesis of neosartoricin B, a prenylated anthracenone that probably exhibits T-cell antiproliferative activity, suggestive of a physiological role as an immunosuppressive agent. The non-reducing polyketide synthase nscA probably synthesizes and cyclizes the decaketide backbone. The hydrolase nscB then mediates the product release through hydrolysis followed by spontaneous decarboxylation. The prenyltransferase nscD catalyzes the addition of the dimethylallyl group to the aromatic C5. The FAD-dependent monooxygenase nscC is then responsible for the stereospecific hydroxylation at C2. Neosartoricin B can be converted into two additional compounds neosartoricins C and D. Neosartoricin C is a spirocyclic compound that is cyclized through the attack of C3 hydroxyl on C14, followed by dehydration. On the other hand, neosartoricin D is a further cyclized compound in which attack of C2 on C14 in neosartoricin C results in the formation of the acetal-containing dioxabicyclo-octanone ring. Both of these compounds are novel and possibly represent related metabolites of the gene cluster. This is Prenyltransferase nscD from Arthroderma benhamiae (strain ATCC MYA-4681 / CBS 112371) (Trichophyton mentagrophytes).